Consider the following 628-residue polypeptide: Chaperone protein HtpG (628 aa).

The interval 1–334 (MTTIDTASET…SEDLPLNLSR (334 aa)) is a; substrate-binding. The segment at 335–550 (EMLQNNPQLA…GFGPDRELEK (216 aa)) is b. Positions 551–628 (MLARANKGAA…LVLRGVVAHG (78 aa)) are c.

It belongs to the heat shock protein 90 family. In terms of assembly, homodimer.

The protein localises to the cytoplasm. In terms of biological role, molecular chaperone. Has ATPase activity. This is Chaperone protein HtpG from Rhodopseudomonas palustris (strain HaA2).